The sequence spans 449 residues: Sulfite exporter TauE/SafE family protein 5 (449 aa).

Helical transmembrane passes span 1–21 (MKTL…NANQ), 57–77 (AIIM…AGGI), 78–98 (GGGG…LKTA), 101–121 (FSAF…LFGG), 127–147 (YDLA…GVIC), 150–170 (VLPE…SSLK), 224–244 (IPWT…VIYL), 259–279 (PCGV…LIFT), 315–335 (AMSF…GMLI), 353–373 (TSFM…LLGM), 378–398 (TAYV…VLVQ), and 409–429 (IIVF…TSFG).

Belongs to the 4-toluene sulfonate uptake permease (TSUP) (TC 2.A.102) family.

The protein resides in the membrane. This Arabidopsis thaliana (Mouse-ear cress) protein is Sulfite exporter TauE/SafE family protein 5.